The sequence spans 282 residues: S-formylglutathione hydrolase (282 aa).

Residue A2 is modified to N-acetylalanine. N6-succinyllysine is present on K4. Catalysis depends on S149, which acts as the Charge relay system. K200 bears the N6-acetyllysine mark. Catalysis depends on charge relay system residues D226 and H260.

This sequence belongs to the esterase D family. As to quaternary structure, homodimer.

It is found in the cytoplasm. The protein resides in the cytoplasmic vesicle. It catalyses the reaction S-formylglutathione + H2O = formate + glutathione + H(+). Serine hydrolase involved in the detoxification of formaldehyde. The sequence is that of S-formylglutathione hydrolase (Esd) from Mus musculus (Mouse).